The chain runs to 338 residues: Lipoate-protein ligase A (338 aa).

Residues 29 to 216 (PATQRVLFLW…AFFAHYGERV (188 aa)) enclose the BPL/LPL catalytic domain. Residues Arg71, 76 to 79 (GAVF), and Lys134 contribute to the ATP site. Residue Lys134 participates in (R)-lipoate binding.

Belongs to the LplA family. Monomer.

Its subcellular location is the cytoplasm. It catalyses the reaction L-lysyl-[lipoyl-carrier protein] + (R)-lipoate + ATP = N(6)-[(R)-lipoyl]-L-lysyl-[lipoyl-carrier protein] + AMP + diphosphate + H(+). It functions in the pathway protein modification; protein lipoylation via exogenous pathway; protein N(6)-(lipoyl)lysine from lipoate: step 1/2. It participates in protein modification; protein lipoylation via exogenous pathway; protein N(6)-(lipoyl)lysine from lipoate: step 2/2. Its function is as follows. Catalyzes both the ATP-dependent activation of exogenously supplied lipoate to lipoyl-AMP and the transfer of the activated lipoyl onto the lipoyl domains of lipoate-dependent enzymes. The sequence is that of Lipoate-protein ligase A from Shigella dysenteriae serotype 1 (strain Sd197).